A 130-amino-acid chain; its full sequence is Lysozyme C (130 aa).

The C-type lysozyme domain occupies 1-130 (KVWERCALAR…VEQYVEGCDL (130 aa)). 4 disulfide bridges follow: C6–C128, C30–C116, C65–C81, and C77–C95. Residues E35 and D53 contribute to the active site.

The protein belongs to the glycosyl hydrolase 22 family. As to quaternary structure, monomer.

It carries out the reaction Hydrolysis of (1-&gt;4)-beta-linkages between N-acetylmuramic acid and N-acetyl-D-glucosamine residues in a peptidoglycan and between N-acetyl-D-glucosamine residues in chitodextrins.. Functionally, lysozymes have primarily a bacteriolytic function; those in tissues and body fluids are associated with the monocyte-macrophage system and enhance the activity of immunoagents. This is Lysozyme C (LYZ) from Camelus dromedarius (Dromedary).